The primary structure comprises 825 residues: Zinc finger protein 229 (825 aa).

The interval 1-26 (METLTSRHEKRALHSQASAISQDREE) is disordered. Residues 34 to 108 (LSFKDVAVVF…SHKELSSCKI (75 aa)) enclose the KRAB domain. Residues 291–315 (KLCQYDEFSEGLRHSAHLNRHQRVP) form a C2H2-type 1; degenerate zinc finger. 7 C2H2-type zinc fingers span residues 349–371 (YRCD…QGVH), 377–399 (YKCE…QRVH), 405–427 (YKCS…QRLH), 433–455 (YTCS…QHIH), 461–483 (YSCG…QKTH), 489–511 (YQCD…QRVH), and 517–539 (YKCN…QRLH). Residue lysine 543 forms a Glycyl lysine isopeptide (Lys-Gly) (interchain with G-Cter in SUMO2) linkage. 10 consecutive C2H2-type zinc fingers follow at residues 545–566 (YKCE…QRVH), 572–594 (YKCS…QRVH), 600–622 (YVCD…QRVH), 628–650 (YKCA…QRVH), 656–678 (YRCQ…QRVH), 684–706 (YTCD…QRLH), 712–734 (YTCC…KRVH), 740–762 (YRCH…QRVH), 768–790 (YKCE…QRVH), and 796–818 (YTCG…QRVH).

Belongs to the krueppel C2H2-type zinc-finger protein family.

It localises to the nucleus. Functionally, may be involved in transcriptional regulation. This Homo sapiens (Human) protein is Zinc finger protein 229.